A 182-amino-acid polypeptide reads, in one-letter code: Ribosome maturation factor RimM (182 aa).

Residues 103-182 (EDDYYWKDLM…RVEVDWDPGF (80 aa)) form the PRC barrel domain.

Belongs to the RimM family. In terms of assembly, binds ribosomal protein uS19.

It is found in the cytoplasm. An accessory protein needed during the final step in the assembly of 30S ribosomal subunit, possibly for assembly of the head region. Essential for efficient processing of 16S rRNA. May be needed both before and after RbfA during the maturation of 16S rRNA. It has affinity for free ribosomal 30S subunits but not for 70S ribosomes. The polypeptide is Ribosome maturation factor RimM (Yersinia pestis bv. Antiqua (strain Antiqua)).